We begin with the raw amino-acid sequence, 598 residues long: (+)-bornyl diphosphate synthase, chloroplastic (598 aa).

The N-terminal 54 residues, 1 to 54 (MSIISMNVSILSKPLNCLHNLERRPSKALLVPCTAPTARLRASCSSKLQEAHQI), are a transit peptide targeting the chloroplast. Residue arginine 314 participates in substrate binding. Residues aspartate 351 and aspartate 355 each contribute to the Mg(2+) site. The DDXXD motif signature appears at 351–355 (DDIYD). Arginine 493 lines the substrate pocket. Positions 496, 500, and 504 each coordinate Mg(2+). Residue threonine 500 coordinates substrate. Lysine 512 is a substrate binding site.

It belongs to the terpene synthase family. As to quaternary structure, homodimer. The cofactor is Mg(2+).

It localises to the plastid. Its subcellular location is the chloroplast. The catalysed reaction is (2E)-geranyl diphosphate = (2S,4R)-bornyl diphosphate. The enzyme catalyses (2E)-geranyl diphosphate = (1R,4S)-camphene + diphosphate. It catalyses the reaction (2E)-geranyl diphosphate = (1R,5R)-alpha-pinene + diphosphate. The protein operates within terpene metabolism; (R)-camphor biosynthesis. Its function is as follows. Catalyzes the formation of the (+)-camphor precursor (+)-bornyl diphosphate from geranyl diphosphate. The enzyme also produces significant amounts of (+)-alpha-pinene, (+)-camphene, and (+-)-limonene. This Salvia officinalis (Sage) protein is (+)-bornyl diphosphate synthase, chloroplastic.